The following is a 367-amino-acid chain: DNA replication and repair protein RecF (367 aa).

30-37 lines the ATP pocket; sequence GANGSGKT.

It belongs to the RecF family.

Its subcellular location is the cytoplasm. Functionally, the RecF protein is involved in DNA metabolism; it is required for DNA replication and normal SOS inducibility. RecF binds preferentially to single-stranded, linear DNA. It also seems to bind ATP. This Pseudomonas putida (strain W619) protein is DNA replication and repair protein RecF.